Here is a 664-residue protein sequence, read N- to C-terminus: Macoilin (664 aa).

Helical transmembrane passes span 28-48, 75-95, 120-140, and 154-174; these read TFLYLKFLVVWALVLLADFVL, AFSVFFVCVAFTSNIICLLFI, VCLPTVSLWILFVYIEAAIRF, and FAAHCIGYPVVTLGFGFKSYV. Residues 252 to 265 show a composition bias toward basic and acidic residues; sequence YREKGKEKDKDAKK. A disordered region spans residues 252 to 274; the sequence is YREKGKEKDKDAKKHNLGINNNN. S305 carries the post-translational modification Phosphoserine. Residues 320 to 348 show a composition bias toward polar residues; it reads KNYKNASGVVNSSPRSHSATNGSIPSSSS. The disordered stretch occupies residues 320-375; the sequence is KNYKNASGVVNSSPRSHSATNGSIPSSSSKNEKKQRCTSKGPSAHKDLMENCIPNN. A glycan (N-linked (GlcNAc...) asparagine) is linked at N324. Residue S332 is modified to Phosphoserine. Residues N340 and N452 are each glycosylated (N-linked (GlcNAc...) asparagine). A disordered region spans residues 630–664; that stretch reads TSPLSPVSPHYSSKFVETSPSGLDPNASVYQPLKK. Phosphoserine is present on residues S631 and S634. An N-linked (GlcNAc...) asparagine glycan is attached at N655.

The protein belongs to the macoilin family.

It is found in the rough endoplasmic reticulum membrane. The protein localises to the nucleus membrane. Plays a role in the regulation of neuronal activity. The protein is Macoilin of Rattus norvegicus (Rat).